Consider the following 84-residue polypeptide: MAKSNKRRPAPEKPVKTRKCVFCSKKGQTIDYKDTALLRTYISERGKIRARRVTGNCVQHQRDIAVAVKNAREVALLPFGSSTR.

Belongs to the bacterial ribosomal protein bS18 family. In terms of assembly, part of the 30S ribosomal subunit. Forms a tight heterodimer with protein bS6.

Its function is as follows. Binds as a heterodimer with protein bS6 to the central domain of the 16S rRNA, where it helps stabilize the platform of the 30S subunit. The polypeptide is Small ribosomal subunit protein bS18B (Mycolicibacterium smegmatis (strain ATCC 700084 / mc(2)155) (Mycobacterium smegmatis)).